The primary structure comprises 635 residues: Threonine--tRNA ligase (635 aa).

Residues 1-61 (MISIRLKDGS…KEDGCLELLD (61 aa)) enclose the TGS domain. The interval 242 to 532 (DHRRLGRELG…LTEHFGGAFP (291 aa)) is catalytic. Zn(2+)-binding residues include cysteine 333, histidine 384, and histidine 509.

This sequence belongs to the class-II aminoacyl-tRNA synthetase family. As to quaternary structure, homodimer. Requires Zn(2+) as cofactor.

The protein localises to the cytoplasm. The catalysed reaction is tRNA(Thr) + L-threonine + ATP = L-threonyl-tRNA(Thr) + AMP + diphosphate + H(+). Functionally, catalyzes the attachment of threonine to tRNA(Thr) in a two-step reaction: L-threonine is first activated by ATP to form Thr-AMP and then transferred to the acceptor end of tRNA(Thr). Also edits incorrectly charged L-seryl-tRNA(Thr). This chain is Threonine--tRNA ligase, found in Syntrophomonas wolfei subsp. wolfei (strain DSM 2245B / Goettingen).